The following is a 434-amino-acid chain: Putative nuclease OPG089 (434 aa).

6 residues coordinate Mg(2+): D33, D74, E168, D170, D196, and D198.

It belongs to the XPG/RAD2 endonuclease family. FEN1 subfamily. The cofactor is Mg(2+).

The protein localises to the virion. Its function is as follows. Putative nuclease that seems to be required for double-strand break repair, homologous recombination, and production of full-length viral genomic DNA. This chain is Putative nuclease OPG089 (OPG089), found in Homo sapiens (Human).